The primary structure comprises 95 residues: Integration host factor subunit beta (95 aa).

Residues 57 to 76 are disordered; sequence APRTGRNPKTGDKVDLEGKY. A compositionally biased stretch (basic and acidic residues) spans 65 to 76; the sequence is KTGDKVDLEGKY.

The protein belongs to the bacterial histone-like protein family. As to quaternary structure, heterodimer of an alpha and a beta chain.

In terms of biological role, this protein is one of the two subunits of integration host factor, a specific DNA-binding protein that functions in genetic recombination as well as in transcriptional and translational control. This chain is Integration host factor subunit beta, found in Enterobacter sp. (strain 638).